The primary structure comprises 209 residues: Thiamine-phosphate synthase (209 aa).

Residues 36–40 (QYRDK) and N68 contribute to the 4-amino-2-methyl-5-(diphosphooxymethyl)pyrimidine site. 2 residues coordinate Mg(2+): D69 and D87. T106 provides a ligand contact to 4-amino-2-methyl-5-(diphosphooxymethyl)pyrimidine. 133–135 (SST) contacts 2-[(2R,5Z)-2-carboxy-4-methylthiazol-5(2H)-ylidene]ethyl phosphate. K136 is a binding site for 4-amino-2-methyl-5-(diphosphooxymethyl)pyrimidine. Residue G163 coordinates 2-[(2R,5Z)-2-carboxy-4-methylthiazol-5(2H)-ylidene]ethyl phosphate.

It belongs to the thiamine-phosphate synthase family. Mg(2+) serves as cofactor.

It catalyses the reaction 2-[(2R,5Z)-2-carboxy-4-methylthiazol-5(2H)-ylidene]ethyl phosphate + 4-amino-2-methyl-5-(diphosphooxymethyl)pyrimidine + 2 H(+) = thiamine phosphate + CO2 + diphosphate. The enzyme catalyses 2-(2-carboxy-4-methylthiazol-5-yl)ethyl phosphate + 4-amino-2-methyl-5-(diphosphooxymethyl)pyrimidine + 2 H(+) = thiamine phosphate + CO2 + diphosphate. The catalysed reaction is 4-methyl-5-(2-phosphooxyethyl)-thiazole + 4-amino-2-methyl-5-(diphosphooxymethyl)pyrimidine + H(+) = thiamine phosphate + diphosphate. It participates in cofactor biosynthesis; thiamine diphosphate biosynthesis; thiamine phosphate from 4-amino-2-methyl-5-diphosphomethylpyrimidine and 4-methyl-5-(2-phosphoethyl)-thiazole: step 1/1. Functionally, condenses 4-methyl-5-(beta-hydroxyethyl)thiazole monophosphate (THZ-P) and 2-methyl-4-amino-5-hydroxymethyl pyrimidine pyrophosphate (HMP-PP) to form thiamine monophosphate (TMP). This chain is Thiamine-phosphate synthase, found in Pseudomonas paraeruginosa (strain DSM 24068 / PA7) (Pseudomonas aeruginosa (strain PA7)).